The primary structure comprises 481 residues: Adenosylhomocysteinase (481 aa).

Substrate contacts are provided by Thr-65, Asp-140, and Glu-200. Position 201 to 203 (201 to 203) interacts with NAD(+); it reads TTT. Residues Lys-230 and Asp-234 each contribute to the substrate site. Residues Asn-235, 264 to 269, Glu-287, Asn-322, 343 to 345, and Asn-393 each bind NAD(+); these read GYGDVG and IGH.

The protein belongs to the adenosylhomocysteinase family. The cofactor is NAD(+).

It is found in the cytoplasm. The catalysed reaction is S-adenosyl-L-homocysteine + H2O = L-homocysteine + adenosine. It functions in the pathway amino-acid biosynthesis; L-homocysteine biosynthesis; L-homocysteine from S-adenosyl-L-homocysteine: step 1/1. In terms of biological role, may play a key role in the regulation of the intracellular concentration of adenosylhomocysteine. This Polynucleobacter necessarius subsp. necessarius (strain STIR1) protein is Adenosylhomocysteinase.